The chain runs to 281 residues: MHEMIFPCGLSHQRSSADNAPLPRLMVAMFHGLLATPDVSPATLERFAAGYGLSCLATPPDEGYWLAWRAGVLGLESPHHGAVTADFVGGAARHRREFGGGAGQPVARAIGLKGSQRPQVVDATAGLGRDAFVMASLGCRVTLVERSPVAAALLDDALARARLDPATHEIAARMQLVFADAADWLAQQPAGSVDVVYLDPMFPDTGKSAAAKKEMQAFQVVVGDDLDAGRLLLVARQVAGKRVVVKRPRLGALLTGEKPAGQQVGKSTRFDLYAPLPPASA.

S-adenosyl-L-methionine-binding positions include 129-130, 145-146, and aspartate 199; these read RD and ER.

Belongs to the methyltransferase superfamily. RsmJ family.

The protein resides in the cytoplasm. It carries out the reaction guanosine(1516) in 16S rRNA + S-adenosyl-L-methionine = N(2)-methylguanosine(1516) in 16S rRNA + S-adenosyl-L-homocysteine + H(+). Specifically methylates the guanosine in position 1516 of 16S rRNA. The protein is Ribosomal RNA small subunit methyltransferase J of Laribacter hongkongensis (strain HLHK9).